The primary structure comprises 303 residues: uncharacterized protein (303 aa).

NADP(+)-binding positions include 7-12 (GAGGVG) and Asn-101. The active-site Proton donor is Lys-184. Residue Glu-267 coordinates NADP(+).

Belongs to the ketopantoate reductase family.

This is an uncharacterized protein from Bacillus subtilis (strain 168).